The chain runs to 481 residues: Argininosuccinate lyase (481 aa).

The segment covering Met-1–Glu-17 has biased composition (polar residues). Residues Met-1–Trp-25 are disordered.

It belongs to the lyase 1 family. Argininosuccinate lyase subfamily.

It localises to the cytoplasm. It carries out the reaction 2-(N(omega)-L-arginino)succinate = fumarate + L-arginine. The protein operates within amino-acid biosynthesis; L-arginine biosynthesis; L-arginine from L-ornithine and carbamoyl phosphate: step 3/3. In Gluconobacter oxydans (strain 621H) (Gluconobacter suboxydans), this protein is Argininosuccinate lyase.